We begin with the raw amino-acid sequence, 176 residues long: Japanin (176 aa).

Residues 1–24 form the signal peptide; it reads MKVLRCLVCSFYIIVSLITTMTIG. Position 47 (E47) interacts with cholesterol. 2 cysteine pairs are disulfide-bonded: C52/C174 and C138/C162. N-linked (GlcNAc...) asparagine glycans are attached at residues N59 and N155.

This sequence belongs to the calycin superfamily. Lipocalin family. As to quaternary structure, homodimer; non-disulfide-linked. Each monomer accommodates one molecule of cholesterol in a pocket. In terms of tissue distribution, expressed in salivary glands.

It localises to the secreted. Salivary tick protein that modulates host immune response. This protein blocks dendritic cell (DC) differentiation from monocytes. In addition, it inhibits up-regulation of costimulatory molecules and pro-inflammatory cytokines in response to stimuli and promotes up-regulation of co-inhibitory molecules and the anti-inflammatory cytokine interleukin-10. It has a pocket to accomodate cholesterol, which may have immune-modulatory roles, either directly or through interactions with the host gut microbiota. In Rhipicephalus appendiculatus (Brown ear tick), this protein is Japanin.